The following is a 98-amino-acid chain: NADH-ubiquinone oxidoreductase chain 4L (98 aa).

3 consecutive transmembrane segments (helical) span residues Met1–Met21, Ala29–Leu49, and Ile61–Ile81.

This sequence belongs to the complex I subunit 4L family. Core subunit of respiratory chain NADH dehydrogenase (Complex I) which is composed of 45 different subunits.

The protein localises to the mitochondrion inner membrane. The catalysed reaction is a ubiquinone + NADH + 5 H(+)(in) = a ubiquinol + NAD(+) + 4 H(+)(out). Core subunit of the mitochondrial membrane respiratory chain NADH dehydrogenase (Complex I) which catalyzes electron transfer from NADH through the respiratory chain, using ubiquinone as an electron acceptor. Part of the enzyme membrane arm which is embedded in the lipid bilayer and involved in proton translocation. The polypeptide is NADH-ubiquinone oxidoreductase chain 4L (MT-ND4L) (Kogia breviceps (Pygmy sperm whale)).